Consider the following 91-residue polypeptide: Small ribosomal subunit protein uS17 (91 aa).

It belongs to the universal ribosomal protein uS17 family. In terms of assembly, part of the 30S ribosomal subunit.

Its function is as follows. One of the primary rRNA binding proteins, it binds specifically to the 5'-end of 16S ribosomal RNA. This chain is Small ribosomal subunit protein uS17, found in Malacoplasma penetrans (strain HF-2) (Mycoplasma penetrans).